The primary structure comprises 414 residues: Tryptophan synthase beta chain (414 aa).

Residues 1–28 (MVSTISRQDQNNNDDLNQPSKEGRFGKY) form a disordered region. Over residues 8–18 (QDQNNNDDLNQ) the composition is skewed to low complexity. Lys-108 bears the N6-(pyridoxal phosphate)lysine mark.

This sequence belongs to the TrpB family. Tetramer of two alpha and two beta chains. Pyridoxal 5'-phosphate serves as cofactor.

It carries out the reaction (1S,2R)-1-C-(indol-3-yl)glycerol 3-phosphate + L-serine = D-glyceraldehyde 3-phosphate + L-tryptophan + H2O. Its pathway is amino-acid biosynthesis; L-tryptophan biosynthesis; L-tryptophan from chorismate: step 5/5. Its function is as follows. The beta subunit is responsible for the synthesis of L-tryptophan from indole and L-serine. This Prochlorococcus marinus subsp. pastoris (strain CCMP1986 / NIES-2087 / MED4) protein is Tryptophan synthase beta chain.